We begin with the raw amino-acid sequence, 889 residues long: Putative receptor-like protein kinase At3g46340 (889 aa).

The first 25 residues, 1 to 25 (MEFPHSVLLVVLIIATFAISNLVQA), serve as a signal peptide directing secretion. Topologically, residues 26–514 (EEDQEGFISL…VITKKKFPVM (489 aa)) are extracellular. N-linked (GlcNAc...) asparagine glycosylation is found at N185, N239, N259, N292, N316, N342, N366, N419, N435, N448, N467, and N474. 3 LRR repeats span residues 414 to 437 (RITS…QNLT), 438 to 460 (HLDK…LASM), and 462 to 483 (SLSF…ALLK). A helical transmembrane segment spans residues 515–535 (IVALVSSAVVVILVVLVLIFV). Residues 536-889 (FKKKKPSNLE…FDTKAVPSAR (354 aa)) lie on the Cytoplasmic side of the membrane. The tract at residues 544–566 (LEDLPPSSNTPRENITSTSISDT) is disordered. One can recognise a Protein kinase domain in the interval 585–874 (KNLQRPLGEG…TQGMDSHSSF (290 aa)). Residues 591-599 (LGEGGFGVV) and K614 contribute to the ATP site. Y659 carries the post-translational modification Phosphotyrosine. The active-site Proton acceptor is the D711. S745 carries the post-translational modification Phosphoserine. Residues T746 and T751 each carry the phosphothreonine modification. At Y759 the chain carries Phosphotyrosine. The interval 863-889 (NKTQGMDSHSSFEQSMSFDTKAVPSAR) is disordered. Polar residues predominate over residues 864–880 (KTQGMDSHSSFEQSMSF).

This sequence belongs to the protein kinase superfamily. Ser/Thr protein kinase family.

Its subcellular location is the cell membrane. It catalyses the reaction L-seryl-[protein] + ATP = O-phospho-L-seryl-[protein] + ADP + H(+). The catalysed reaction is L-threonyl-[protein] + ATP = O-phospho-L-threonyl-[protein] + ADP + H(+). This is Putative receptor-like protein kinase At3g46340 from Arabidopsis thaliana (Mouse-ear cress).